The sequence spans 73 residues: Homeodomain-only protein (73 aa).

Positions 3–62 form a DNA-binding region, homeobox; degenerate; sequence AETASGPTEDQVEILEYNFNKVDKHPDSTTLCLIAAEAGLSEEETQKWFKQRLAKWRRSE.

In terms of assembly, interacts with serum response factor (SRF). Component of a large complex containing histone deacetylases such as HDAC2. Interacts with the acetylated forms of HSPA1A and HSPA1B. Interacts with HSPA8. As to expression, widely expressed. Expressed in the heart, brain, placenta, lung, skeletal and smooth muscles, uterus, urinary bladder, kidney and spleen. Down-regulated in some types of cancer such as lung cancer, choriocarcinoma, head and neck squamous cell carcinoma and oral squamous cell carcinoma.

Its subcellular location is the nucleus. The protein resides in the cytoplasm. Atypical homeodomain protein which does not bind DNA and is required to modulate cardiac growth and development. Acts via its interaction with SRF, thereby modulating the expression of SRF-dependent cardiac-specific genes and cardiac development. Prevents SRF-dependent transcription either by inhibiting SRF binding to DNA or by recruiting histone deacetylase (HDAC) proteins that prevent transcription by SRF. Overexpression causes cardiac hypertrophy. May act as a tumor suppressor. Acts as a co-chaperone for HSPA1A and HSPA1B chaperone proteins and assists in chaperone-mediated protein refolding. The chain is Homeodomain-only protein (HOPX) from Homo sapiens (Human).